We begin with the raw amino-acid sequence, 213 residues long: Urease accessory protein UreG (213 aa).

12–19 (GPVGSGKT) is a GTP binding site.

It belongs to the SIMIBI class G3E GTPase family. UreG subfamily. In terms of assembly, homodimer. UreD, UreF and UreG form a complex that acts as a GTP-hydrolysis-dependent molecular chaperone, activating the urease apoprotein by helping to assemble the nickel containing metallocenter of UreC. The UreE protein probably delivers the nickel.

It localises to the cytoplasm. Functionally, facilitates the functional incorporation of the urease nickel metallocenter. This process requires GTP hydrolysis, probably effectuated by UreG. The protein is Urease accessory protein UreG of Marinomonas sp. (strain MWYL1).